The sequence spans 350 residues: Probable flap endonuclease 1 homolog (350 aa).

Residues 1 to 95 form an N-domain region; it reads MGITKLAHLI…AVLEKRAQST (95 aa). Residue Asp34 coordinates Mg(2+). Residue Arg61 participates in DNA binding. Mg(2+) contacts are provided by Asp77, Glu130, Glu132, Asp151, and Asp153. The segment at 110–223 is I-domain; sequence NQECLRLLHL…SRALKLIKEH (114 aa). Glu130 contributes to the DNA binding site. DNA-binding residues include Gly201 and Asp203. Asp203 lines the Mg(2+) pocket. The tract at residues 317–325 is interaction with PCNA; sequence RQSRLEDFF.

It belongs to the XPG/RAD2 endonuclease family. FEN1 subfamily. As to quaternary structure, interacts with PCNA. Three molecules of fen1 bind to one PCNA trimer with each molecule binding to one PCNA monomer. PCNA stimulates the nuclease activity without altering cleavage specificity. Requires Mg(2+) as cofactor. Post-translationally, phosphorylated. Phosphorylation upon DNA damage induces relocalization to the nuclear plasma.

The protein localises to the nucleus. It localises to the nucleolus. Its subcellular location is the nucleoplasm. It is found in the mitochondrion. Its function is as follows. Structure-specific nuclease with 5'-flap endonuclease and 5'-3' exonuclease activities involved in DNA replication and repair. During DNA replication, cleaves the 5'-overhanging flap structure that is generated by displacement synthesis when DNA polymerase encounters the 5'-end of a downstream Okazaki fragment. It enters the flap from the 5'-end and then tracks to cleave the flap base, leaving a nick for ligation. Also involved in the long patch base excision repair (LP-BER) pathway, by cleaving within the apurinic/apyrimidinic (AP) site-terminated flap. Acts as a genome stabilization factor that prevents flaps from equilibrating into structures that lead to duplications and deletions. Also possesses 5'-3' exonuclease activity on nicked or gapped double-stranded DNA, and exhibits RNase H activity. Also involved in replication and repair of rDNA and in repairing mitochondrial DNA. This Danio rerio (Zebrafish) protein is Probable flap endonuclease 1 homolog.